A 220-amino-acid chain; its full sequence is Deoxyribose-phosphate aldolase (220 aa).

Catalysis depends on D89, which acts as the Proton donor/acceptor. Residue K151 is the Schiff-base intermediate with acetaldehyde of the active site. The active-site Proton donor/acceptor is K180.

Belongs to the DeoC/FbaB aldolase family. DeoC type 1 subfamily.

It localises to the cytoplasm. It carries out the reaction 2-deoxy-D-ribose 5-phosphate = D-glyceraldehyde 3-phosphate + acetaldehyde. It functions in the pathway carbohydrate degradation; 2-deoxy-D-ribose 1-phosphate degradation; D-glyceraldehyde 3-phosphate and acetaldehyde from 2-deoxy-alpha-D-ribose 1-phosphate: step 2/2. Functionally, catalyzes a reversible aldol reaction between acetaldehyde and D-glyceraldehyde 3-phosphate to generate 2-deoxy-D-ribose 5-phosphate. The chain is Deoxyribose-phosphate aldolase from Staphylococcus haemolyticus (strain JCSC1435).